A 538-amino-acid polypeptide reads, in one-letter code: Coiled-coil domain-containing protein 8 (538 aa).

Positions 58–128 (IMEKSTPHPP…QGPRRGKKVR (71 aa)) are disordered. Over residues 119–128 (QGPRRGKKVR) the composition is skewed to basic residues. A phosphoserine mark is found at Ser-142, Ser-146, and Ser-261. The disordered stretch occupies residues 213–473 (WAPRAGPGVG…GTAPGARARK (261 aa)). Residues 301 to 313 (DSQREEAIADQRE) are compositionally biased toward basic and acidic residues. The segment covering 321 to 332 (AGAPADQGAEAA) has biased composition (low complexity). Residues 349–366 (AEEGAEAADNQREEAADN) are a coiled coil. Basic and acidic residues-rich tracts occupy residues 357-373 (DNQREEAADNQRAEAPA), 381-392 (DNHREEAADNQR), and 405-419 (DNQREEAVHDQRERA). Composition is skewed to low complexity over residues 428 to 438 (QRAQARAGQRA) and 458 to 469 (AAQGTTGTAPGA). Residues 500-506 (PRLPTLP) carry the PxLPxI/L motif; mediates interaction with ANKRA2 motif. The stretch at 514 to 535 (EARNLRVLRAEARAEAEQGEQE) forms a coiled coil.

As to quaternary structure, component of the 3M complex, composed of core components CUL7, CCDC8 and OBSL1. Interacts (via PxLPxI/L motif) with ANKRA2 (via ankyrin repeats); may link the 3M complex to histone deacetylases including HDAC4 and HDAC5. In terms of tissue distribution, widely expressed with low levels in spleen, skeletal muscle, small intestine, kidney and liver.

It localises to the cytoplasm. It is found in the cytoskeleton. The protein localises to the microtubule organizing center. Its subcellular location is the centrosome. Functionally, core component of the 3M complex, a complex required to regulate microtubule dynamics and genome integrity. It is unclear how the 3M complex regulates microtubules, it could act by controlling the level of a microtubule stabilizer. Required for localization of CUL7 to the centrosome. The chain is Coiled-coil domain-containing protein 8 (CCDC8) from Homo sapiens (Human).